Reading from the N-terminus, the 163-residue chain is MEHYRKAGSVELPAPSPMPQLPPDTLEMRVRAGSKIRNLLGLALERLEGGSARHVVFSGSGRAAGKAVSCAEIVKRRVPGLYQLTKLRFLQTEDSWVPTSPDTGLDPLTVRSHVPAVWVLLSRDPLDPNEYGYQPPGAPPDLGPTPASSCGPQPRRRARDTRF.

Disordered regions lie at residues 1–22 (MEHYRKAGSVELPAPSPMPQLP) and 129–163 (NEYGYQPPGAPPDLGPTPASSCGPQPRRRARDTRF). Residues 154–163 (PRRRARDTRF) are compositionally biased toward basic residues.

Belongs to the histone-like Alba family.

It localises to the nucleus. Its function is as follows. May be a component of ribonuclease P or MRP. In Bos taurus (Bovine), this protein is Ribonuclease P protein subunit p25-like protein (RPP25L).